Reading from the N-terminus, the 400-residue chain is Enoyl-[acyl-carrier-protein] reductase [NADH] (400 aa).

NAD(+) is bound by residues 74 to 75 (FE), 111 to 112 (DA), and 139 to 140 (VA). Tyr225 lines the substrate pocket. Residue Tyr235 is the Proton donor of the active site. Residues Lys244 and 273–275 (VVT) each bind NAD(+).

The protein belongs to the TER reductase family. Monomer.

The catalysed reaction is a 2,3-saturated acyl-[ACP] + NAD(+) = a (2E)-enoyl-[ACP] + NADH + H(+). It functions in the pathway lipid metabolism; fatty acid biosynthesis. Its function is as follows. Involved in the final reduction of the elongation cycle of fatty acid synthesis (FAS II). Catalyzes the reduction of a carbon-carbon double bond in an enoyl moiety that is covalently linked to an acyl carrier protein (ACP). This chain is Enoyl-[acyl-carrier-protein] reductase [NADH], found in Psychromonas ingrahamii (strain DSM 17664 / CCUG 51855 / 37).